The chain runs to 414 residues: F-box protein At3g47030 (414 aa).

A disordered region spans residues 1–24; the sequence is MSGMLGLSAVMGKRPKQQVTARPR. The 50-residue stretch at 28–77 folds into the F-box domain; the sequence is IEKPEEIPDDLLIDVFSRLSIEDVARCRCLSRFWSSILRRRYFTELFHKM.

This is F-box protein At3g47030 from Arabidopsis thaliana (Mouse-ear cress).